Reading from the N-terminus, the 132-residue chain is ATP synthase epsilon chain, cyanelle (132 aa).

It belongs to the ATPase epsilon chain family. As to quaternary structure, F-type ATPases have 2 components, CF(1) - the catalytic core - and CF(0) - the membrane proton channel. CF(1) has five subunits: alpha(3), beta(3), gamma(1), delta(1), epsilon(1). CF(0) has three main subunits: a, b and c.

Its subcellular location is the plastid. It is found in the cyanelle thylakoid membrane. Produces ATP from ADP in the presence of a proton gradient across the membrane. The chain is ATP synthase epsilon chain, cyanelle from Cyanophora paradoxa.